Reading from the N-terminus, the 532-residue chain is Aspartate--tRNA ligase 1, cytoplasmic (532 aa).

Positions 7 to 41 form a coiled coil; the sequence is LEECGEKISKKESKKRAAKLEKLLRKQEREEATSS. The tract at residues 31–58 is disordered; that stretch reads RKQEREEATSSSLSLEEEDESCSSNYGD. The segment at residues 88 to 169 is a DNA-binding region (OB); it reads VSIRGRLHKN…QVEIHVRKMY (82 aa). L-aspartate is bound at residue glutamate 260. The tract at residues 282 to 285 is aspartate; sequence QLHK. Position 304 (arginine 304) interacts with L-aspartate. Residues 304 to 306, 312 to 314, and glutamate 455 contribute to the ATP site; these read RAE and RHL. 2 residues coordinate Mg(2+): glutamate 455 and serine 458. Residues serine 458 and arginine 462 each coordinate L-aspartate. 503 to 506 lines the ATP pocket; it reads GLER.

It belongs to the class-II aminoacyl-tRNA synthetase family. Type 2 subfamily.

The protein localises to the cytoplasm. It localises to the cytosol. It carries out the reaction tRNA(Asp) + L-aspartate + ATP = L-aspartyl-tRNA(Asp) + AMP + diphosphate. In terms of biological role, catalyzes the specific attachment of an amino acid to its cognate tRNA in a 2 step reaction: the amino acid (AA) is first activated by ATP to form AA-AMP and then transferred to the acceptor end of the tRNA. This is Aspartate--tRNA ligase 1, cytoplasmic from Arabidopsis thaliana (Mouse-ear cress).